The chain runs to 331 residues: N-acetyl-alpha-D-glucosaminyl-diphospho-ditrans,octacis-undecaprenol 4-epimerase (331 aa).

NAD(+) is bound by residues 13–14 (FV), 34–39 (QQSHFY), 47–48 (DV), Ser109, Tyr132, and Lys136. Ser109 and Tyr132 together coordinate substrate. Tyr132 functions as the Proton acceptor in the catalytic mechanism. Substrate contacts are provided by residues 183-184 (GK) and 199-201 (YVG).

Belongs to the NAD(P)-dependent epimerase/dehydratase family. NAD(+) is required as a cofactor.

It is found in the cell membrane. It carries out the reaction N-acetyl-alpha-D-glucosaminyl-di-trans,octa-cis-undecaprenyl diphosphate = N-acetyl-alpha-D-galactosaminyl-di-trans,octa-cis-undecaprenyl diphosphate. The protein operates within bacterial outer membrane biogenesis; LPS O-antigen biosynthesis. Involved in biosynthesis of the repeating tetrasaccharide unit of the O-antigen. Catalyzes the reversible epimerization of the hydroxyl group at position C4 of undecaprenyl pyrophosphate-N-acetylglucosamine (UndPP-GlcNAc) to yield undecaprenyl pyrophosphate-N-acetylgalactosamine (UndPP-GalNAc). The polypeptide is N-acetyl-alpha-D-glucosaminyl-diphospho-ditrans,octacis-undecaprenol 4-epimerase (Escherichia coli O157:H7).